Here is a 684-residue protein sequence, read N- to C-terminus: Histone-lysine N-methyltransferase SETMAR (684 aa).

The segment at M1–M345 is histone-lysine N-methyltransferase. The Pre-SET domain occupies P73–G136. Zn(2+) contacts are provided by C75, C77, C82, C87, C89, C118, C122, C124, and C128. Residues F139–S263 form the SET domain. Residues K149–W151, Y192, R220, and N223–H224 contribute to the S-adenosyl-L-methionine site. Positions 226, 287, 289, and 294 each coordinate Zn(2+). Positions L283 to P299 constitute a Post-SET domain. The interval L346–D684 is mariner transposase Hsmar1. 2 DNA-binding regions (H-T-H motif) span residues K364–K395 and T428–K448. Position 496 (D496) interacts with Mg(2+). Position 498 is an N6-methyllysine (K498). The residue at position 508 (S508) is a Phosphoserine; by CHEK1. D588 is a Mg(2+) binding site.

In the N-terminal section; belongs to the class V-like SAM-binding methyltransferase superfamily. It in the C-terminal section; belongs to the mariner transposase family. As to quaternary structure, homodimer. Interacts with PRPF19; required for SETMAR recruitment to damaged DNA sites. Interacts with PCNA. Interacts with TOP2A; stimulates TOP2A topoisomerase activity. May interact with RAD9A and/or RAD9B. It depends on Mg(2+) as a cofactor. In terms of processing, methylated. Methylation regulates activity in DNA decatenation. Phosphorylated at Ser-508 by CHEK1 and dephosphorylated by protein phosphatase 2A/PP2A. Phosphorylation at Ser-508 is enhanced by DNA damage and promotes recruitment to damaged DNA. It stimulates DNA repair and impairs replication fork restart. As to expression, widely expressed, with highest expression in placenta and ovary and lowest expression in skeletal muscle.

Its subcellular location is the nucleus. The protein resides in the chromosome. It carries out the reaction L-lysyl(36)-[histone H3] + 2 S-adenosyl-L-methionine = N(6),N(6)-dimethyl-L-lysyl(36)-[histone H3] + 2 S-adenosyl-L-homocysteine + 2 H(+). Functionally, protein derived from the fusion of a methylase with the transposase of an Hsmar1 transposon that plays a role in DNA double-strand break repair, stalled replication fork restart and DNA integration. DNA-binding protein, it is indirectly recruited to sites of DNA damage through protein-protein interactions. Also has kept a sequence-specific DNA-binding activity recognizing the 19-mer core of the 5'-terminal inverted repeats (TIRs) of the Hsmar1 element and displays a DNA nicking and end joining activity. In parallel, has a histone methyltransferase activity and methylates 'Lys-4' and 'Lys-36' of histone H3. Specifically mediates dimethylation of H3 'Lys-36' at sites of DNA double-strand break and may recruit proteins required for efficient DSB repair through non-homologous end-joining. Also regulates replication fork processing, promoting replication fork restart and regulating DNA decatenation through stimulation of the topoisomerase activity of TOP2A. This is Histone-lysine N-methyltransferase SETMAR from Homo sapiens (Human).